The primary structure comprises 140 residues: Nucleoside diphosphate kinase (140 aa).

ATP-binding residues include K11, F59, R87, T93, R104, and N114. The active-site Pros-phosphohistidine intermediate is H117.

The protein belongs to the NDK family. In terms of assembly, homotetramer. It depends on Mg(2+) as a cofactor.

The protein localises to the cytoplasm. It carries out the reaction a 2'-deoxyribonucleoside 5'-diphosphate + ATP = a 2'-deoxyribonucleoside 5'-triphosphate + ADP. The enzyme catalyses a ribonucleoside 5'-diphosphate + ATP = a ribonucleoside 5'-triphosphate + ADP. Functionally, major role in the synthesis of nucleoside triphosphates other than ATP. The ATP gamma phosphate is transferred to the NDP beta phosphate via a ping-pong mechanism, using a phosphorylated active-site intermediate. The polypeptide is Nucleoside diphosphate kinase (Methylobacterium nodulans (strain LMG 21967 / CNCM I-2342 / ORS 2060)).